Here is a 519-residue protein sequence, read N- to C-terminus: ATP synthase subunit beta (519 aa).

Over residues 1-26 (MAKAATPKRAPARAAAIPAAATPAAK) the composition is skewed to low complexity. A disordered region spans residues 1 to 40 (MAKAATPKRAPARAAAIPAAATPAAKPAKRASTRSAAARS). 197–204 (GGAGVGKT) provides a ligand contact to ATP.

Belongs to the ATPase alpha/beta chains family. As to quaternary structure, F-type ATPases have 2 components, CF(1) - the catalytic core - and CF(0) - the membrane proton channel. CF(1) has five subunits: alpha(3), beta(3), gamma(1), delta(1), epsilon(1). CF(0) has three main subunits: a(1), b(2) and c(9-12). The alpha and beta chains form an alternating ring which encloses part of the gamma chain. CF(1) is attached to CF(0) by a central stalk formed by the gamma and epsilon chains, while a peripheral stalk is formed by the delta and b chains.

The protein localises to the cell inner membrane. It carries out the reaction ATP + H2O + 4 H(+)(in) = ADP + phosphate + 5 H(+)(out). Produces ATP from ADP in the presence of a proton gradient across the membrane. The catalytic sites are hosted primarily by the beta subunits. In Chelativorans sp. (strain BNC1), this protein is ATP synthase subunit beta.